The primary structure comprises 87 residues: Small ribosomal subunit protein bS16 (87 aa).

Belongs to the bacterial ribosomal protein bS16 family.

The chain is Small ribosomal subunit protein bS16 from Ehrlichia ruminantium (strain Gardel).